The primary structure comprises 175 residues: FOXL2 neighbor protein (175 aa).

Disordered regions lie at residues 1-39 (MTRT…PALV) and 70-100 (AQKT…GKRR).

The polypeptide is FOXL2 neighbor protein (FOXL2NB) (Homo sapiens (Human)).